Here is a 560-residue protein sequence, read N- to C-terminus: Protein NRT1/ PTR FAMILY 2.5 (560 aa).

Residues Met-1 to Glu-20 form a disordered region. 12 helical membrane passes run Thr-34–Ile-54, Met-77–Ser-97, Phe-101–Pro-121, Ile-141–Ala-161, Phe-177–Val-197, Leu-207–Val-227, Ala-323–Val-343, Val-372–Met-392, Leu-404–Val-424, Val-441–Ala-461, Ser-480–Ile-500, and Tyr-520–Phe-540.

Belongs to the major facilitator superfamily. Proton-dependent oligopeptide transporter (POT/PTR) (TC 2.A.17) family. As to expression, expressed in the root epidermis or cortex.

It is found in the membrane. In terms of biological role, transporter involved in a passive nitrate efflux. The polypeptide is Protein NRT1/ PTR FAMILY 2.5 (NPF2.5) (Arabidopsis thaliana (Mouse-ear cress)).